A 95-amino-acid polypeptide reads, in one-letter code: Aspartyl/glutamyl-tRNA(Asn/Gln) amidotransferase subunit C (95 aa).

It belongs to the GatC family. As to quaternary structure, heterotrimer of A, B and C subunits.

The enzyme catalyses L-glutamyl-tRNA(Gln) + L-glutamine + ATP + H2O = L-glutaminyl-tRNA(Gln) + L-glutamate + ADP + phosphate + H(+). It catalyses the reaction L-aspartyl-tRNA(Asn) + L-glutamine + ATP + H2O = L-asparaginyl-tRNA(Asn) + L-glutamate + ADP + phosphate + 2 H(+). In terms of biological role, allows the formation of correctly charged Asn-tRNA(Asn) or Gln-tRNA(Gln) through the transamidation of misacylated Asp-tRNA(Asn) or Glu-tRNA(Gln) in organisms which lack either or both of asparaginyl-tRNA or glutaminyl-tRNA synthetases. The reaction takes place in the presence of glutamine and ATP through an activated phospho-Asp-tRNA(Asn) or phospho-Glu-tRNA(Gln). The sequence is that of Aspartyl/glutamyl-tRNA(Asn/Gln) amidotransferase subunit C from Methylobacterium radiotolerans (strain ATCC 27329 / DSM 1819 / JCM 2831 / NBRC 15690 / NCIMB 10815 / 0-1).